A 116-amino-acid polypeptide reads, in one-letter code: MAPHGRKRKAGAAPMETVDKREKLAEGATVVIEHCTSURVYGRHAAALSQALQLEAPELPVQVNPSKPRRGSFEVTLLRSDNSRVELWTGIKKGPPRKLKFPEPQEVVEELKKYLS.

The residue at position 20 (Lys-20) is an N6-acetyllysine. Positions 35–38 form a cross-link, cysteinyl-selenocysteine (Cys-Sec); redox-active; it reads CTSU. Residue Sec-38 is a non-standard amino acid, selenocysteine.

It belongs to the SelWTH family.

Functionally, may be involved in a redox-related process. This Mus musculus (Mouse) protein is Selenoprotein H.